Here is a 220-residue protein sequence, read N- to C-terminus: Adenylate kinase (220 aa).

An ATP-binding site is contributed by 10–15; sequence GSGKST. The NMP stretch occupies residues 30–59; it reads SSGDIIRAEISSRTPLGLEMEKYLSRGDLI. Residues Ser31, Arg36, 57–59, 83–86, and Gln90 contribute to the AMP site; these read DLI and GYPR. The LID stretch occupies residues 124–161; that stretch reads GRRICSKCGAVYHIEFNPPKIPGKCDICGGDLIQRPDD. Arg125 provides a ligand contact to ATP. Cys128 and Cys131 together coordinate Zn(2+). An ATP-binding site is contributed by 134-135; it reads VY. Residues Cys148 and Cys151 each contribute to the Zn(2+) site. AMP is bound by residues Arg158 and Arg169. Gly197 serves as a coordination point for ATP.

This sequence belongs to the adenylate kinase family. Monomer.

It localises to the cytoplasm. The enzyme catalyses AMP + ATP = 2 ADP. It functions in the pathway purine metabolism; AMP biosynthesis via salvage pathway; AMP from ADP: step 1/1. Catalyzes the reversible transfer of the terminal phosphate group between ATP and AMP. Plays an important role in cellular energy homeostasis and in adenine nucleotide metabolism. The chain is Adenylate kinase from Pyrococcus horikoshii (strain ATCC 700860 / DSM 12428 / JCM 9974 / NBRC 100139 / OT-3).